Consider the following 418-residue polypeptide: Tyrosine--tRNA ligase (418 aa).

L-tyrosine is bound at residue Y38. Positions 43-52 (CTAKSLHVGS) match the 'HIGH' region motif. L-tyrosine is bound by residues Y175 and Q179. The 'KMSKS' region motif lies at 235-239 (KMGKT). Residue K238 participates in ATP binding. Positions 348 to 413 (LPIIKLLQIS…CGKKRHLKIM (66 aa)) constitute an S4 RNA-binding domain.

The protein belongs to the class-I aminoacyl-tRNA synthetase family. TyrS type 1 subfamily. In terms of assembly, homodimer.

It is found in the cytoplasm. The catalysed reaction is tRNA(Tyr) + L-tyrosine + ATP = L-tyrosyl-tRNA(Tyr) + AMP + diphosphate + H(+). Catalyzes the attachment of tyrosine to tRNA(Tyr) in a two-step reaction: tyrosine is first activated by ATP to form Tyr-AMP and then transferred to the acceptor end of tRNA(Tyr). This is Tyrosine--tRNA ligase from Ehrlichia canis (strain Jake).